Reading from the N-terminus, the 225-residue chain is Suppressor of cytokine signaling 3 (225 aa).

A kinase inhibitory region (KIR) region spans residues leucine 22–leucine 33. Positions valine 34–glycine 45 are extended SH2 subdomain (ESS). Residues phenylalanine 46 to glutamate 142 enclose the SH2 domain. The span at proline 131–glutamate 142 shows a compositional bias: pro residues. The tract at residues proline 131–arginine 162 is disordered. Residues proline 143–proline 155 show a composition bias toward low complexity. Residues valine 177–proline 224 form the SOCS box domain.

As to quaternary structure, interacts with multiple activated proteins of the tyrosine kinase signaling pathway including IGF1 receptor, insulin receptor and JAK2. Binding to JAK2 is mediated through the KIR and SH2 domains to a phosphorylated tyrosine residue within the JAK2 JH1 domain. Binds specific activated tyrosine residues of the leptin, EPO, IL12, GSCF and gp130 receptors. Interaction with CSNK1E stabilizes SOCS3 protein. Component of the probable ECS(SOCS3) E3 ubiquitin-protein ligase complex which contains CUL5, RNF7/RBX2, Elongin BC complex and SOCS3. Interacts with CUL5, RNF7, ELOB and ELOC. Interacts with CUL2. Interacts with FGFR3. Interacts with INSR. Interacts with BCL10; this interaction may interfere with BCL10-binding with PELI2. Interacts with NOD2 (via CARD domain); the interaction promotes NOD2 degradation. In terms of processing, phosphorylated on tyrosine residues after stimulation by the cytokines, IL-2, EPO or IGF1. Widely expressed with high expression in heart, placenta, skeletal muscle, peripheral blood leukocytes, fetal and adult lung, and fetal liver and kidney. Lower levels in thymus.

It functions in the pathway protein modification; protein ubiquitination. SOCS family proteins form part of a classical negative feedback system that regulates cytokine signal transduction. SOCS3 is involved in negative regulation of cytokines that signal through the JAK/STAT pathway. Inhibits cytokine signal transduction by binding to tyrosine kinase receptors including IL6ST/gp130, LIF, erythropoietin, insulin, IL12, GCSF and leptin receptors. Binding to JAK2 inhibits its kinase activity and regulates IL6 signaling. Suppresses fetal liver erythropoiesis. Regulates onset and maintenance of allergic responses mediated by T-helper type 2 cells. Probable substrate recognition component of a SCF-like ECS (Elongin BC-CUL2/5-SOCS-box protein) E3 ubiquitin-protein ligase complex which mediates the ubiquitination and subsequent proteasomal degradation of target proteins. The polypeptide is Suppressor of cytokine signaling 3 (Homo sapiens (Human)).